A 611-amino-acid chain; its full sequence is Homeobox protein BEL1 homolog (611 aa).

Disordered stretches follow at residues 63–87 (QIRM…DQNQ), 101–133 (VNND…NPTS), 141–160 (LRPQ…TQHQ), and 174–195 (SHHQ…FQIG). The segment covering 118–133 (PSQGLSLSLSSSNPTS) has biased composition (low complexity). The segment covering 174–183 (SHHQNNNNNN) has biased composition (low complexity). The tract at residues 197–213 (SKYLSPAQELLSEFCSL) is SR/KY domain. The disordered stretch occupies residues 225–263 (MKHKKKQKGKQQEEWDTSHHSNNDQHDQSATTSSKKHVP). The segment covering 234–251 (KQQEEWDTSHHSNNDQHD) has biased composition (basic and acidic residues). Residues 269-340 (EFMELQKRKA…CLKDGLVGQI (72 aa)) form a BELL domain region. Residues 275–290 (KRKAKLLSMLEELKRR) carry the Bipartite nuclear localization motif. The homeobox DNA-binding region spans 391–453 (PWRPQRGLPE…NARVRLWKPM (63 aa)).

It belongs to the TALE/BELL homeobox family. In terms of assembly, may form heterodimeric complexes with TALE/KNOX proteins STM, KNAT1/BP, KNAT2 and KNAT5. Interacts with AG-SEP1 and AG-SEP3 dimers. Interacts with KNATM, isoform KNATM-B. Interacts with BZIP30. In terms of tissue distribution, expressed in both floral and vegetative tissues.

The protein resides in the nucleus. Plays a major role in ovule patterning and in determination of integument identity via its interaction with MADS-box factors. Formation of complex with AG-SEP dimers negatively regulates the carpel identity process and favors the maintenance of ovule identity. BEL1-STM complex maintains the indeterminacy of the inflorescence meristem. Required, with SPL, for cytokinin-induced PIN1 expression in ovules. The sequence is that of Homeobox protein BEL1 homolog (BEL1) from Arabidopsis thaliana (Mouse-ear cress).